Consider the following 279-residue polypeptide: Phosphate import ATP-binding protein PstB (279 aa).

Positions 33–274 constitute an ABC transporter domain; that stretch reads LDINKLNLFY…PLKKKTEDYI (242 aa). 65–72 provides a ligand contact to ATP; it reads GPSGCGKS.

The protein belongs to the ABC transporter superfamily. Phosphate importer (TC 3.A.1.7) family. The complex is composed of two ATP-binding proteins (PstB), two transmembrane proteins (PstC and PstA) and a solute-binding protein (PstS).

The protein resides in the cell inner membrane. The enzyme catalyses phosphate(out) + ATP + H2O = ADP + 2 phosphate(in) + H(+). Functionally, part of the ABC transporter complex PstSACB involved in phosphate import. Responsible for energy coupling to the transport system. This is Phosphate import ATP-binding protein PstB from Colwellia psychrerythraea (strain 34H / ATCC BAA-681) (Vibrio psychroerythus).